The primary structure comprises 263 residues: MDVNRRIGVKDALLALLLALLQGCPLGETAPNASPLVGSNWGNPRRYVHLQTSTDMSNFYLEIRLDGTVRKSTARTSYSVILLKADTRERIAILGVKSNRYLCMDLEGSPFSSPTCIRDDCLFNHSLLENNRDVYYSSRTGILFNLEGSRQVFVVGQNVPQTSLFLPRTNTVPLERLLLHRDKRNQVVDPSDPHRVAVGRAEEGSDSRALQEDDADLEVETEVEVGDDGRNASRERLQAPSDHDPWGVFSSNPGSPRSSGTVG.

The N-terminal stretch at 1-23 is a signal peptide; the sequence is MDVNRRIGVKDALLALLLALLQG. Residues C103 and C121 are joined by a disulfide bond. The N-linked (GlcNAc...) asparagine glycan is linked to N124. A compositionally biased stretch (basic and acidic residues) spans 198–211; sequence VGRAEEGSDSRALQ. The disordered stretch occupies residues 198–263; the sequence is VGRAEEGSDS…GSPRSSGTVG (66 aa). The segment covering 212–226 has biased composition (acidic residues); the sequence is EDDADLEVETEVEVG. The span at 227–245 shows a compositional bias: basic and acidic residues; that stretch reads DDGRNASRERLQAPSDHDP. N231 is a glycosylation site (N-linked (GlcNAc...) asparagine). The span at 249 to 263 shows a compositional bias: polar residues; that stretch reads FSSNPGSPRSSGTVG.

This sequence belongs to the heparin-binding growth factors family.

It is found in the secreted. The polypeptide is Fibroblast growth factor 23 (fgf23) (Tetraodon nigroviridis (Spotted green pufferfish)).